The sequence spans 243 residues: Venom nerve growth factor 5 (243 aa).

An N-terminal signal peptide occupies residues 1 to 18; sequence MSMLCYTLIIAFLIGIWA. A propeptide spanning residues 19–125 is cleaved from the precursor; it reads APKSEDNVPL…TLNRNIRTKR (107 aa). Positions 47-66 are enriched in basic and acidic residues; sequence GLKTSRNTDQRHPAPKKAED. The disordered stretch occupies residues 47–67; the sequence is GLKTSRNTDQRHPAPKKAEDQ. Disulfide bonds link Cys139–Cys204, Cys182–Cys232, and Cys192–Cys234. N-linked (GlcNAc...) asparagine glycosylation is present at Asn148.

It belongs to the NGF-beta family. As to quaternary structure, homodimer; non-covalently linked. Expressed by the venom gland.

The protein localises to the secreted. Nerve growth factor is important for the development and maintenance of the sympathetic and sensory nervous systems. It stimulates division and differentiation of sympathetic and embryonic sensory neurons as well as basal forebrain cholinergic neurons in the brain. Its relevance in the snake venom is not clear. However, it has been shown to inhibit metalloproteinase-dependent proteolysis of platelet glycoprotein Ib alpha, suggesting a metalloproteinase inhibition to prevent metalloprotease autodigestion and/or protection against prey proteases. Binds a lipid between the two protein chains in the homodimer. The lipid-bound form promotes histamine relase from mouse mast cells, contrary to the lipid-free form. In Tropidechis carinatus (Australian rough-scaled snake), this protein is Venom nerve growth factor 5.